The primary structure comprises 401 residues: Exodeoxyribonuclease 7 large subunit (401 aa).

It belongs to the XseA family. Heterooligomer composed of large and small subunits.

The protein localises to the cytoplasm. It catalyses the reaction Exonucleolytic cleavage in either 5'- to 3'- or 3'- to 5'-direction to yield nucleoside 5'-phosphates.. Bidirectionally degrades single-stranded DNA into large acid-insoluble oligonucleotides, which are then degraded further into small acid-soluble oligonucleotides. The sequence is that of Exodeoxyribonuclease 7 large subunit from Clostridium botulinum (strain Langeland / NCTC 10281 / Type F).